The following is a 126-amino-acid chain: S-adenosylmethionine decarboxylase proenzyme (126 aa).

Catalysis depends on serine 63, which acts as the Schiff-base intermediate with substrate; via pyruvic acid. Pyruvic acid (Ser); by autocatalysis is present on serine 63. Histidine 68 (proton acceptor; for processing activity) is an active-site residue. Cysteine 83 (proton donor; for catalytic activity) is an active-site residue.

It belongs to the prokaryotic AdoMetDC family. Type 1 subfamily. In terms of assembly, heterotetramer of two alpha and two beta chains arranged as a dimer of alpha/beta heterodimers. Requires pyruvate as cofactor. In terms of processing, is synthesized initially as an inactive proenzyme. Formation of the active enzyme involves a self-maturation process in which the active site pyruvoyl group is generated from an internal serine residue via an autocatalytic post-translational modification. Two non-identical subunits are generated from the proenzyme in this reaction, and the pyruvate is formed at the N-terminus of the alpha chain, which is derived from the carboxyl end of the proenzyme. The post-translation cleavage follows an unusual pathway, termed non-hydrolytic serinolysis, in which the side chain hydroxyl group of the serine supplies its oxygen atom to form the C-terminus of the beta chain, while the remainder of the serine residue undergoes an oxidative deamination to produce ammonia and the pyruvoyl group blocking the N-terminus of the alpha chain.

It carries out the reaction S-adenosyl-L-methionine + H(+) = S-adenosyl 3-(methylsulfanyl)propylamine + CO2. It participates in amine and polyamine biosynthesis; S-adenosylmethioninamine biosynthesis; S-adenosylmethioninamine from S-adenosyl-L-methionine: step 1/1. In terms of biological role, catalyzes the decarboxylation of S-adenosylmethionine to S-adenosylmethioninamine (dcAdoMet), the propylamine donor required for the synthesis of the polyamines spermine and spermidine from the diamine putrescine. This Bacillus velezensis (strain DSM 23117 / BGSC 10A6 / LMG 26770 / FZB42) (Bacillus amyloliquefaciens subsp. plantarum) protein is S-adenosylmethionine decarboxylase proenzyme.